The primary structure comprises 145 residues: Thioredoxin C-3 (145 aa).

3 residues coordinate heme: C25, C28, and H29. The 112-residue stretch at 29–140 folds into the Thioredoxin domain; the sequence is HQALLPLEPI…LQQWLDQQLQ (112 aa). C65 and C68 are disulfide-bonded.

This sequence belongs to the thioredoxin family.

In terms of biological role, participates in various redox reactions through the reversible oxidation of its active center dithiol to a disulfide and catalyzes dithiol-disulfide exchange reactions. In Corynebacterium nephridii, this protein is Thioredoxin C-3.